The following is a 358-amino-acid chain: Acid phosphatase (358 aa).

An N-terminal signal peptide occupies residues 1 to 17 (MKFSTIALPLLASAALA). Asparagine 20, asparagine 27, and asparagine 32 each carry an N-linked (GlcNAc...) asparagine glycan. Residues 21-41 (SSHSGTNATSHNSTVPNENSK) are disordered. Residues aspartate 49, aspartate 50, and serine 81 each coordinate Mg(2+). Asparagine 92 and asparagine 145 each carry an N-linked (GlcNAc...) asparagine glycan. A Mg(2+)-binding site is contributed by asparagine 156. The active site involves serine 189. Asparagine 199 and asparagine 278 each carry an N-linked (GlcNAc...) asparagine glycan.

This sequence belongs to the SurE nucleotidase family. It depends on Mg(2+) as a cofactor.

The protein localises to the secreted. It carries out the reaction a phosphate monoester + H2O = an alcohol + phosphate. In terms of biological role, probably serves to scavenge phosphorus for growing cells. This Yarrowia lipolytica (strain CLIB 122 / E 150) (Yeast) protein is Acid phosphatase (PHO2).